The sequence spans 456 residues: MLPSQSPAIFTVSRLNQTVRLLLEHEMGQVWISGEISNFTQPASGHWYFTLKDDTAQVRCAMFRNSNRRVTFRPQHGQQVLVRANITLYEPRGDYQIIVESMQPAGEGLLQQKYEQLKAKLQAEGLFDQQYKKPLPSPAHCVGVITSKTGAALHDILHVLKRRDPSLPVIIYPTAVQGDDAPGQIVRAIELANQRNECDVLIVGRGGGSLEDLWSFNDERVARAIFASRIPVVSAVGHETDVTIADFVADLRAPTPSAAAEVVSRNQQELLRQVQSTRQRLEMAMDYYLANRTRRFTQIHHRLQQQHPQLRLARQQTMLERLQKRMSFALENQLKRTGQQQQRLTQRLNQQNPQPKIHRAQTRIQQLEYRLAETLRVQLSATRERFGNAVTHLEAVSPLSTLARGYSVTTATDGNVLKKVKQVKAGEMLTTRLEDGWIESEVKNIQPVKKSRKKVH.

It belongs to the XseA family. In terms of assembly, heterooligomer composed of large and small subunits.

The protein localises to the cytoplasm. It carries out the reaction Exonucleolytic cleavage in either 5'- to 3'- or 3'- to 5'-direction to yield nucleoside 5'-phosphates.. Its function is as follows. Bidirectionally degrades single-stranded DNA into large acid-insoluble oligonucleotides, which are then degraded further into small acid-soluble oligonucleotides. In Shigella boydii serotype 18 (strain CDC 3083-94 / BS512), this protein is Exodeoxyribonuclease 7 large subunit.